Here is a 197-residue protein sequence, read N- to C-terminus: ATP-dependent Clp protease proteolytic subunit (197 aa).

The Nucleophile role is filled by serine 100. Histidine 125 is an active-site residue.

This sequence belongs to the peptidase S14 family. As to quaternary structure, component of the chloroplastic Clp protease core complex.

The protein resides in the plastid. The protein localises to the chloroplast stroma. It carries out the reaction Hydrolysis of proteins to small peptides in the presence of ATP and magnesium. alpha-casein is the usual test substrate. In the absence of ATP, only oligopeptides shorter than five residues are hydrolyzed (such as succinyl-Leu-Tyr-|-NHMec, and Leu-Tyr-Leu-|-Tyr-Trp, in which cleavage of the -Tyr-|-Leu- and -Tyr-|-Trp bonds also occurs).. Functionally, cleaves peptides in various proteins in a process that requires ATP hydrolysis. Has a chymotrypsin-like activity. Plays a major role in the degradation of misfolded proteins. The chain is ATP-dependent Clp protease proteolytic subunit from Angiopteris evecta (Mule's foot fern).